Here is a 75-residue protein sequence, read N- to C-terminus: Small ribosomal subunit protein bS21 (75 aa).

A disordered region spans residues 52-75 (RRARKLARKRAQREGLIGGRPGAR). The span at 53-62 (RARKLARKRA) shows a compositional bias: basic residues.

Belongs to the bacterial ribosomal protein bS21 family.

This Brucella anthropi (strain ATCC 49188 / DSM 6882 / CCUG 24695 / JCM 21032 / LMG 3331 / NBRC 15819 / NCTC 12168 / Alc 37) (Ochrobactrum anthropi) protein is Small ribosomal subunit protein bS21.